Consider the following 458-residue polypeptide: Exodeoxyribonuclease 7 large subunit (458 aa).

The protein belongs to the XseA family. Heterooligomer composed of large and small subunits.

The protein resides in the cytoplasm. The catalysed reaction is Exonucleolytic cleavage in either 5'- to 3'- or 3'- to 5'-direction to yield nucleoside 5'-phosphates.. Bidirectionally degrades single-stranded DNA into large acid-insoluble oligonucleotides, which are then degraded further into small acid-soluble oligonucleotides. The chain is Exodeoxyribonuclease 7 large subunit from Stutzerimonas stutzeri (strain A1501) (Pseudomonas stutzeri).